Consider the following 295-residue polypeptide: Ornithine carbamoyltransferase, catabolic (295 aa).

Residues 49 to 52 (STRT), Q76, R100, and 127 to 130 (HPCQ) each bind carbamoyl phosphate. Residues N155, D213, and 217–218 (SM) each bind L-ornithine. Residues 253–254 (CL) and R281 each bind carbamoyl phosphate.

Belongs to the aspartate/ornithine carbamoyltransferase superfamily. OTCase family. In terms of assembly, homohexamer.

Its subcellular location is the cytoplasm. It catalyses the reaction carbamoyl phosphate + L-ornithine = L-citrulline + phosphate + H(+). The protein operates within amino-acid degradation; L-arginine degradation via ADI pathway; carbamoyl phosphate from L-arginine: step 2/2. Its activity is regulated as follows. Arginine lead to a slight activation. Inhibited by all nucleotide phosphates. Reversibly catalyzes the transfer of the carbamoyl group from carbamoyl phosphate (CP) to the N(epsilon) atom of ornithine (ORN) to produce L-citrulline. The polypeptide is Ornithine carbamoyltransferase, catabolic (arcB) (Halobacterium salinarum (strain ATCC 700922 / JCM 11081 / NRC-1) (Halobacterium halobium)).